The primary structure comprises 232 residues: Protein Mis18-alpha (232 aa).

Serine 36, serine 39, and serine 40 each carry phosphoserine. A Mis18 domain is found at 79 to 177 (PLVFLCSGCR…SVEAIESYIL (99 aa)). Zn(2+)-binding residues include cysteine 84, cysteine 87, cysteine 140, and cysteine 143. Lysine 161 participates in a covalent cross-link: Glycyl lysine isopeptide (Lys-Gly) (interchain with G-Cter in SUMO2). At serine 232 the chain carries Phosphoserine.

This sequence belongs to the mis18 family. In terms of assembly, homodimer, and heterodimer with OIP5/MIS18B. Identified in a complex containing MIS18A, OIP5/MIS18B, MIS18BP1, RBBP7 and RBBP4.

It localises to the nucleus. The protein resides in the chromosome. Its subcellular location is the centromere. In terms of biological role, required for recruitment of CENPA to centromeres and normal chromosome segregation during mitosis. The polypeptide is Protein Mis18-alpha (MIS18A) (Otolemur garnettii (Small-eared galago)).